The chain runs to 574 residues: MATRAPLAPPPNETEASVSRITREGKKLTYKLNVMQQPERARACGAGAKSSADRRPVDPPPVVELRVYESDPNDDLNKTDITFAYNANFFLYATLETARPMAQGRFAPNPTCPVLTGVPVAGVAYLDRPSQAGYFIFPDLSVRHEGVYRLNFHLYEETKESKDANENAPIQSLSNPMPSKPMAPKSFLEFRLEVVSVPFTVFSAKKFPGLATSTSLSRVIAEQGCRVRIRRDVRMRRRGEKRTDDYDYDEERVYRSSDRISTPDTHGYAGTPVERPRSTSTSTVDPSFPYGVDAQRRSSGATEYGFQGAQPYQRPLPPAPGPAPAAVSTPAPPAPPAPPSHNPGYQSHLSFGSTQTQYPAPQLPPTPQTASTLAAPYSPHPSYSHARNPSTSAEYETPGYSYPPSRMSTERSSYPKNGLPPLRLEPPKPLNMPSGEPRSSDPNAYHSVAQSAAPRSQTPSSSLVPSLPPLKALSGDYPNNLSQSSSSTSQSPSHDLGAGKKFFWDTGASLSKRSYEDSFGHDDRPLYNGMRPDTESYPRRLSDASRNFYNETRDEMAYKRANGRMATKISPALQ.

Disordered regions lie at residues 1–22 (MATR…SRIT), 39–60 (ERAR…VDPP), 255–500 (RSSD…GAGK), and 513–540 (RSYE…YPRR). A Velvet domain is found at 25–230 (GKKLTYKLNV…AEQGCRVRIR (206 aa)). Residues 39 to 44 (ERARAC) carry the Nuclear localization signal motif. Pro residues-rich tracts occupy residues 314-323 (RPLPPAPGPA) and 330-341 (PAPPAPPAPPSH). Composition is skewed to polar residues over residues 343-353 (PGYQSHLSFGS), 385-394 (HARNPSTSAE), 406-415 (RMSTERSSYP), and 448-458 (VAQSAAPRSQT). The PEST stretch occupies residues 457-501 (QTPSSSLVPSLPPLKALSGDYPNNLSQSSSSTSQSPSHDLGAGKK). Low complexity-rich tracts occupy residues 459 to 474 (PSSS…KALS) and 482 to 493 (SQSSSSTSQSPS). The segment covering 513–525 (RSYEDSFGHDDRP) has biased composition (basic and acidic residues).

This sequence belongs to the velvet family. VeA subfamily. Component of the heterotrimeric velvet complex composed of laeA, veA and velB; VeA acting as a bridging protein between laeA and velB.

Its subcellular location is the nucleus. The protein resides in the cytoplasm. Functionally, component of the velvet transcription factor complex that controls sexual/asexual developmental ratio in response to light, promoting sexual development in the darkness while stimulating asexual sporulation under illumination. The velvet complex hat acts as a global regulator for secondary metabolite gene expression. Controls the expression of the penicillin gene cluster. The chain is Developmental and secondary metabolism regulator veA from Aspergillus oryzae (strain ATCC 42149 / RIB 40) (Yellow koji mold).